The sequence spans 239 residues: Protein LIFEGUARD 2 (239 aa).

Helical transmembrane passes span 41–61 (LLVT…SVFF), 66–86 (AGFA…CPLY), 96–116 (YLLL…TCAF), 121–141 (VILE…LYTF), 156–176 (FLFG…LFPL), 179–199 (ISVM…IVYD), and 213–233 (IWAA…LLTL).

The protein belongs to the BI1 family. Expressed in seedlings, roots, leaves, inflorescences and flowers.

The protein resides in the membrane. Regulates the brassinosteroid (BR) signaling pathway that mediates cell elongation and organ morphogenesis. Its function is as follows. (Microbial infection) Facilitates the development of the powdery mildew fungus E.cruciferarum. In terms of biological role, (Microbial infection) May prevent cell death upon A.alternata f.sp. lycopersici (AAL) toxin treatment. The polypeptide is Protein LIFEGUARD 2 (Arabidopsis thaliana (Mouse-ear cress)).